The primary structure comprises 533 residues: MASTTTCTRFTDEYQLFEELGKGAFSVVRRCMKIPTGQEYAAKIINTKKLSARDHQKLEREARICRLLKHPNIVRLHDSISEEGFHYLVFDLVTGGELFEDIVAREYYSEADASHCIQQILESVNHCHLNGIVHRDLKPENLLLASKSKGAAVKLADFGLAIEVQGDQQAWFGFAGTPGYLSPEVLRKDPYGKPVDMWACGVILYILLVGYPPFWDEDQHRLYQQIKAGAYDFPSPEWDTVTPEAKDLINKMLTINPAKRITASEALKHPWISHRATVASMMHRQETVDCLKKFNARRKLKGAILTTMLATRNFSAAKSLLKKPDGVKINNKANVVTSPKENIPTPALEPQTTVIHNPDGNKESTESSNTTIEDEDVKARKQEIIKVTEQLIEAINNGDFEAYTKICDPGLTAFEPEALGNLVEGMDFHRFYFENALSKSNKPIHTIILNPHVHLVGEDAACIAYIRLTQYMDGSGMPKTMQSEETRVWHRRDGKWQNVHFHRSGSPTVPIKPPCIPNGKENYSGGTSLWQNI.

An N-acetylalanine modification is found at Ala-2. Residues 14 to 272 (YQLFEELGKG…ASEALKHPWI (259 aa)) form the Protein kinase domain. Residues 20–28 (LGKGAFSVV) and Lys-43 contribute to the ATP site. Asp-136 (proton acceptor) is an active-site residue. Residues 283–292 (HRQETVDCLK) are autoinhibitory domain. Phosphothreonine; by autocatalysis is present on Thr-287. Residues 291–301 (LKKFNARRKLK) form a calmodulin-binding region. 2 positions are modified to phosphothreonine; by autocatalysis: Thr-306 and Thr-307. Residue Ser-315 is modified to Phosphoserine. Lys-318 carries the N6-acetyllysine modification. Phosphoserine occurs at positions 319 and 364. The disordered stretch occupies residues 337 to 375 (TSPKENIPTPALEPQTTVIHNPDGNKESTESSNTTIEDE). Thr-365 carries the post-translational modification Phosphothreonine. Ser-367 carries the phosphoserine modification. Phosphothreonine is present on residues Thr-370 and Thr-371. Residues Ser-438, Ser-524, and Ser-528 each carry the phosphoserine modification.

This sequence belongs to the protein kinase superfamily. CAMK Ser/Thr protein kinase family. CaMK subfamily. As to quaternary structure, CAMK2 is composed of 4 different chains: alpha (CAMK2A), beta (CAMK2B), gamma (CAMK2G), and delta (CAMK2D). The different isoforms assemble into homo- or heteromultimeric holoenzymes composed of 12 subunits with two hexameric rings stacked one on top of the other. Interacts with RRAD and CACNB2. Post-translationally, autophosphorylation of Thr-287 following activation by Ca(2+)/calmodulin. Phosphorylation of Thr-287 locks the kinase into an activated state. In terms of tissue distribution, expressed in liver.

The protein localises to the cell membrane. Its subcellular location is the sarcolemma. It localises to the sarcoplasmic reticulum membrane. The enzyme catalyses L-seryl-[protein] + ATP = O-phospho-L-seryl-[protein] + ADP + H(+). It carries out the reaction L-threonyl-[protein] + ATP = O-phospho-L-threonyl-[protein] + ADP + H(+). Activated by Ca(2+)/calmodulin. Binding of calmodulin results in conformational change that relieves intrasteric autoinhibition and allows autophosphorylation of Thr-287 which turns the kinase in a constitutively active form and confers to the kinase a Ca(2+)-independent activity. Functionally, calcium/calmodulin-dependent protein kinase involved in the regulation of Ca(2+) homeostatis and excitation-contraction coupling (ECC) in heart by targeting ion channels, transporters and accessory proteins involved in Ca(2+) influx into the myocyte, Ca(2+) release from the sarcoplasmic reticulum (SR), SR Ca(2+) uptake and Na(+) and K(+) channel transport. Targets also transcription factors and signaling molecules to regulate heart function. In its activated form, is involved in the pathogenesis of dilated cardiomyopathy and heart failure. Contributes to cardiac decompensation and heart failure by regulating SR Ca(2+) release via direct phosphorylation of RYR2 Ca(2+) channel on 'Ser-2808'. In the nucleus, phosphorylates the MEF2 repressor HDAC4, promoting its nuclear export and binding to 14-3-3 protein, and expression of MEF2 and genes involved in the hypertrophic program. Is essential for left ventricular remodeling responses to myocardial infarction. In pathological myocardial remodeling acts downstream of the beta adrenergic receptor signaling cascade to regulate key proteins involved in ECC. Regulates Ca(2+) influx to myocytes by binding and phosphorylating the L-type Ca(2+) channel subunit beta-2 CACNB2. In addition to Ca(2+) channels, can target and regulate the cardiac sarcolemmal Na(+) channel Nav1.5/SCN5A and the K+ channel Kv4.3/KCND3, which contribute to arrhythmogenesis in heart failure. Phosphorylates phospholamban (PLN/PLB), an endogenous inhibitor of SERCA2A/ATP2A2, contributing to the enhancement of SR Ca(2+) uptake that may be important in frequency-dependent acceleration of relaxation (FDAR) and maintenance of contractile function during acidosis. May participate in the modulation of skeletal muscle function in response to exercise, by regulating SR Ca(2+) transport through phosphorylation of PLN/PLB and triadin, a ryanodine receptor-coupling factor. In response to interferon-gamma (IFN-gamma) stimulation, catalyzes phosphorylation of STAT1, stimulating the JAK-STAT signaling pathway. The sequence is that of Calcium/calmodulin-dependent protein kinase type II subunit delta (CAMK2D) from Oryctolagus cuniculus (Rabbit).